We begin with the raw amino-acid sequence, 378 residues long: Putative F-box protein At3g24580 (378 aa).

Residues 1-47 (MTKMSNLPNDLAEEVLSRVSLTSLRNVRLTCKDWNTLSKGESFAKNH) enclose the F-box domain.

The sequence is that of Putative F-box protein At3g24580 from Arabidopsis thaliana (Mouse-ear cress).